Reading from the N-terminus, the 264-residue chain is THAP domain-containing protein 10 (264 aa).

The THAP-type zinc finger occupies 1 to 90; that stretch reads MPARCVAAHC…LVAGAVPTLH (90 aa). 2 disordered regions span residues 90-136 and 160-195; these read HRVP…PRAG and TQPHADNPSNTVTSVPTHCEEGPVHKSTQISLKRPR. The segment covering 99 to 122 has biased composition (basic and acidic residues); sequence GGEEGDQAGRPDTRGELQAARHSE. A compositionally biased stretch (polar residues) spans 160–175; it reads TQPHADNPSNTVTSVP.

The sequence is that of THAP domain-containing protein 10 (THAP10) from Pongo abelii (Sumatran orangutan).